A 454-amino-acid polypeptide reads, in one-letter code: Ig mu chain C region (454 aa).

Positions 1-105 (SPSSPTVFPL…NKDLRVPIPV (105 aa)) are CH1. Cys27 and Cys88 are joined by a disulfide. Residues Asn45, Asn112, Asn192, Asn210, Asn238, Asn257, and Asn280 are each glycosylated (N-linked (GlcNAc...) asparagine). The CH2 stretch occupies residues 106-218 (VTEMNPNVSV…KNVSSTCAAS (113 aa)). Cys135 and Cys198 are joined by a disulfide. The segment at 219 to 324 (PSTDIQAFPI…QKKFISKPRE (106 aa)) is CH3. Disulfide bonds link Cys245–Cys304 and Cys352–Cys414. The CH4 stretch occupies residues 325-454 (MNKTPPAVYQ…IMSDAGGTCY (130 aa)). Residue Asn441 is glycosylated (N-linked (GlcNAc...) asparagine).

This is Ig mu chain C region from Mesocricetus auratus (Golden hamster).